Here is a 156-residue protein sequence, read N- to C-terminus: ATP synthase subunit b (156 aa).

Residues 11–31 (AIAFILFVWFCMKYVWPPLMA) form a helical membrane-spanning segment.

The protein belongs to the ATPase B chain family. In terms of assembly, F-type ATPases have 2 components, F(1) - the catalytic core - and F(0) - the membrane proton channel. F(1) has five subunits: alpha(3), beta(3), gamma(1), delta(1), epsilon(1). F(0) has three main subunits: a(1), b(2) and c(10-14). The alpha and beta chains form an alternating ring which encloses part of the gamma chain. F(1) is attached to F(0) by a central stalk formed by the gamma and epsilon chains, while a peripheral stalk is formed by the delta and b chains.

Its subcellular location is the cell inner membrane. In terms of biological role, f(1)F(0) ATP synthase produces ATP from ADP in the presence of a proton or sodium gradient. F-type ATPases consist of two structural domains, F(1) containing the extramembraneous catalytic core and F(0) containing the membrane proton channel, linked together by a central stalk and a peripheral stalk. During catalysis, ATP synthesis in the catalytic domain of F(1) is coupled via a rotary mechanism of the central stalk subunits to proton translocation. Its function is as follows. Component of the F(0) channel, it forms part of the peripheral stalk, linking F(1) to F(0). This chain is ATP synthase subunit b, found in Enterobacter sp. (strain 638).